The chain runs to 266 residues: Small ribosomal subunit protein uS2 (266 aa).

Belongs to the universal ribosomal protein uS2 family.

The polypeptide is Small ribosomal subunit protein uS2 (Paramagnetospirillum magneticum (strain ATCC 700264 / AMB-1) (Magnetospirillum magneticum)).